The primary structure comprises 210 residues: Heart- and neural crest derivatives-expressed protein 2 (210 aa).

The interval 81 to 101 (SGAGGLMQRPVKRRGTANRKE) is disordered. Residues 90-101 (PVKRRGTANRKE) show a composition bias toward basic residues. The 53-residue stretch at 92–144 (KRRGTANRKERRRTISINSAFAELRECIPNVPADTKLSKIKTLRLATSYIAYL) folds into the bHLH domain.

In terms of assembly, efficient DNA binding requires dimerization with another bHLH protein. In terms of tissue distribution, heart, liver and spleen.

It localises to the nucleus. Functionally, essential for cardiac morphogenesis and for the development of branchial arches. Binds DNA on E-box consensus sequence 5'-CANNTG-3'. The protein is Heart- and neural crest derivatives-expressed protein 2 (hand2) of Xenopus laevis (African clawed frog).